The chain runs to 178 residues: Ribulose bisphosphate carboxylase small subunit, chloroplastic (178 aa).

A chloroplast-targeting transit peptide spans 1-55; that stretch reads MASSMMVSTAAVSRTSPAQSNMVVPFAGLHSSAAFPVTRKFADSSKLPSNGLRVR.

Belongs to the RuBisCO small chain family. As to quaternary structure, heterohexadecamer of 8 large and 8 small subunits.

The protein localises to the plastid. It localises to the chloroplast. RuBisCO catalyzes two reactions: the carboxylation of D-ribulose 1,5-bisphosphate, the primary event in carbon dioxide fixation, as well as the oxidative fragmentation of the pentose substrate. Both reactions occur simultaneously and in competition at the same active site. Although the small subunit is not catalytic it is essential for maximal activity. This is Ribulose bisphosphate carboxylase small subunit, chloroplastic from Zantedeschia aethiopica (White calla lily).